Here is a 634-residue protein sequence, read N- to C-terminus: Threonine--tRNA ligase (634 aa).

Positions 1–142 are editing domain; the sequence is MQLLLIHSDY…LSRSIRPEGA (142 aa). Residues 214-513 are catalytic; that stretch reads PHVELMRRLE…TEEGKVPMLP (300 aa). Residues Cys-306, His-358, and His-482 each coordinate Zn(2+).

The protein belongs to the class-II aminoacyl-tRNA synthetase family. In terms of assembly, homodimer. Requires Zn(2+) as cofactor.

The protein resides in the cytoplasm. It carries out the reaction tRNA(Thr) + L-threonine + ATP = L-threonyl-tRNA(Thr) + AMP + diphosphate + H(+). Functionally, catalyzes the attachment of threonine to tRNA(Thr) in a two-step reaction: L-threonine is first activated by ATP to form Thr-AMP and then transferred to the acceptor end of tRNA(Thr). Edits incorrectly charged L-seryl-tRNA(Thr) probably via its editing domain (tested with total bovine tRNA). Activates L-serine, but does not detectably transfer it to tRNA (tested with total bovine tRNA). This is Threonine--tRNA ligase from Methanosarcina mazei (strain ATCC BAA-159 / DSM 3647 / Goe1 / Go1 / JCM 11833 / OCM 88) (Methanosarcina frisia).